Here is a 1451-residue protein sequence, read N- to C-terminus: Protein clueless (1451 aa).

Disordered regions lie at residues 1-101 (MALE…EYAA) and 264-286 (KKTRPDSVDCTPPEYVTPGVSEP). A compositionally biased stretch (low complexity) spans 9–53 (NSNATATGDATATKASSKAKENNNTAGGKKNLNPIPSQQNSNQNL). The segment covering 66–75 (GKKKGKKNRN) has biased composition (basic residues). Phosphoserine is present on serine 270. One can recognise a Clu domain in the interval 424-666 (RAEDAFSSKL…RTFPPDVNFL (243 aa)). Disordered regions lie at residues 722-775 (AKKQ…ESKT), 961-1012 (AVSS…SSVS), and 1413-1451 (ANNNGEAEDADPKDVKEQAQAGTQLTNGEKAAATEATSS). The span at 748 to 758 (GADKTDVKEEK) shows a compositional bias: basic and acidic residues. Residues 969–984 (KKRGNGGKHNKHKSSK) are compositionally biased toward basic residues. A compositionally biased stretch (low complexity) spans 989–1010 (QQQQQTTGNQNGSSSGTSNGSS).

This sequence belongs to the CLU family.

The protein resides in the cytoplasm. Its function is as follows. mRNA-binding protein involved in proper cytoplasmic distribution of mitochondria. This is Protein clueless from Drosophila yakuba (Fruit fly).